We begin with the raw amino-acid sequence, 594 residues long: uncharacterized protein (594 aa).

In terms of biological role, the presence of the two linear plasmids, termed pGKL1 and pGKL2, in strains of Kluyveromyces lactis confers the killer phenotype to the host cell, by promoting the secretion of a toxin able to inhibit the growth of sensitive strains. This is an uncharacterized protein from Kluyveromyces lactis (strain ATCC 8585 / CBS 2359 / DSM 70799 / NBRC 1267 / NRRL Y-1140 / WM37) (Yeast).